The following is a 246-amino-acid chain: tRNA (guanine-N(1)-)-methyltransferase (246 aa).

S-adenosyl-L-methionine contacts are provided by residues G112 and 131-136 (IGDYVL).

It belongs to the RNA methyltransferase TrmD family. Homodimer.

It localises to the cytoplasm. It catalyses the reaction guanosine(37) in tRNA + S-adenosyl-L-methionine = N(1)-methylguanosine(37) in tRNA + S-adenosyl-L-homocysteine + H(+). Specifically methylates guanosine-37 in various tRNAs. The chain is tRNA (guanine-N(1)-)-methyltransferase from Thermosipho africanus (strain TCF52B).